The sequence spans 267 residues: MRRIAVMGAAGRMGKTLIEAVQQTPGAGLTAAIDRPDSSLVGADAGELAALGRIGVLLSDDLAKVADEFDVLIDFTHPSVTLKNLAFCRKHGKAMIIGTTGFSVEEKQLLAEAGKDIPIVFAANFSVGVNLSLKLLDMAARVLGDDVDIEIIEAHHRHKVDAPSGTALRMGEVVANALGRNLQEVAVYGREGQTGARDRKTIGFATVRAGDVVGDHTVLFAAEGERLEITHKASSRMTFAKGAVRAALWLDGREPALYDMQDVLELR.

NAD(+) is bound by residues 8 to 13 and Asp-34; that span reads GAAGRM. Arg-35 lines the NADP(+) pocket. NAD(+) is bound by residues 98–100 and 122–125; these read GTT and AANF. His-155 (proton donor/acceptor) is an active-site residue. His-156 provides a ligand contact to (S)-2,3,4,5-tetrahydrodipicolinate. Lys-159 (proton donor) is an active-site residue. Position 165-166 (165-166) interacts with (S)-2,3,4,5-tetrahydrodipicolinate; it reads GT.

It belongs to the DapB family.

It localises to the cytoplasm. The enzyme catalyses (S)-2,3,4,5-tetrahydrodipicolinate + NAD(+) + H2O = (2S,4S)-4-hydroxy-2,3,4,5-tetrahydrodipicolinate + NADH + H(+). It carries out the reaction (S)-2,3,4,5-tetrahydrodipicolinate + NADP(+) + H2O = (2S,4S)-4-hydroxy-2,3,4,5-tetrahydrodipicolinate + NADPH + H(+). It functions in the pathway amino-acid biosynthesis; L-lysine biosynthesis via DAP pathway; (S)-tetrahydrodipicolinate from L-aspartate: step 4/4. Its function is as follows. Catalyzes the conversion of 4-hydroxy-tetrahydrodipicolinate (HTPA) to tetrahydrodipicolinate. In Pseudomonas putida (strain GB-1), this protein is 4-hydroxy-tetrahydrodipicolinate reductase.